The sequence spans 178 residues: ATP synthase subunit delta (178 aa).

Belongs to the ATPase delta chain family. In terms of assembly, F-type ATPases have 2 components, F(1) - the catalytic core - and F(0) - the membrane proton channel. F(1) has five subunits: alpha(3), beta(3), gamma(1), delta(1), epsilon(1). F(0) has three main subunits: a(1), b(2) and c(10-14). The alpha and beta chains form an alternating ring which encloses part of the gamma chain. F(1) is attached to F(0) by a central stalk formed by the gamma and epsilon chains, while a peripheral stalk is formed by the delta and b chains.

Its subcellular location is the cell inner membrane. Its function is as follows. F(1)F(0) ATP synthase produces ATP from ADP in the presence of a proton or sodium gradient. F-type ATPases consist of two structural domains, F(1) containing the extramembraneous catalytic core and F(0) containing the membrane proton channel, linked together by a central stalk and a peripheral stalk. During catalysis, ATP synthesis in the catalytic domain of F(1) is coupled via a rotary mechanism of the central stalk subunits to proton translocation. Functionally, this protein is part of the stalk that links CF(0) to CF(1). It either transmits conformational changes from CF(0) to CF(1) or is implicated in proton conduction. This is ATP synthase subunit delta from Hahella chejuensis (strain KCTC 2396).